A 78-amino-acid chain; its full sequence is Translation initiation factor IF-1, chloroplastic (78 aa).

Residues 1–72 form the S1-like domain; sequence MEKQNLIDME…TKGRITYRLR (72 aa).

It belongs to the IF-1 family. In terms of assembly, component of the 30S ribosomal translation pre-initiation complex which assembles on the 30S ribosome in the order IF-2 and IF-3, IF-1 and N-formylmethionyl-tRNA(fMet); mRNA recruitment can occur at any time during PIC assembly.

It is found in the plastid. Its subcellular location is the chloroplast. One of the essential components for the initiation of protein synthesis. Stabilizes the binding of IF-2 and IF-3 on the 30S subunit to which N-formylmethionyl-tRNA(fMet) subsequently binds. Helps modulate mRNA selection, yielding the 30S pre-initiation complex (PIC). Upon addition of the 50S ribosomal subunit IF-1, IF-2 and IF-3 are released leaving the mature 70S translation initiation complex. This is Translation initiation factor IF-1, chloroplastic from Anthoceros angustus (Hornwort).